The sequence spans 948 residues: Sensor histidine kinase RcsC (948 aa).

Topologically, residues 1 to 20 are cytoplasmic; it reads MKYLASFRTTLKVSRYLFRA. The helical transmembrane segment at 21-41 threads the bilayer; sequence LALLIWLLIAFVSVFYIVNAL. The Periplasmic segment spans residues 42–313; that stretch reads HQRESEIRQE…PVDLVLERIR (272 aa). The chain crosses the membrane as a helical span at residues 314–334; that stretch reads ILILNAILLNVLVGAGLFTLA. Topologically, residues 335–948 are cytoplasmic; that stretch reads RMYERRIFIP…YAERVRKTRA (614 aa). The 69-residue stretch at 357–425 folds into the PAS domain; sequence QFNRKIVASA…VLTSNNTNLQ (69 aa). Residues 476–692 enclose the Histidine kinase domain; that stretch reads TVSHELRTPL…QFTLRIPLYG (217 aa). His479 carries the phosphohistidine; by autocatalysis modification. The region spanning 705–805 is the ABL domain; the sequence is AGTCCWLAVR…ARIYSIELDS (101 aa). One can recognise a Response regulatory domain in the interval 826 to 940; the sequence is MILVVDDHPI…VLKQTLAVYA (115 aa). Asp875 is subject to 4-aspartylphosphate.

The protein belongs to the RcsC family. As to quaternary structure, interacts with RcsD. In terms of processing, autophosphorylated. Activation probably requires a transfer of a phosphate group from a His in the transmitter domain to an Asp in the receiver domain.

The protein localises to the cell inner membrane. The enzyme catalyses ATP + protein L-histidine = ADP + protein N-phospho-L-histidine.. Its function is as follows. Component of the Rcs signaling system, which controls transcription of numerous genes. RcsC functions as a membrane-associated protein kinase that phosphorylates RcsD in response to environmental signals. The phosphoryl group is then transferred to the response regulator RcsB. This is Sensor histidine kinase RcsC from Salmonella typhimurium (strain LT2 / SGSC1412 / ATCC 700720).